The sequence spans 126 residues: Fluoride-specific ion channel FluC (126 aa).

4 helical membrane-spanning segments follow: residues 3 to 23, 37 to 57, 70 to 90, and 104 to 124; these read FAILGFIALGGAVGACARFLV, IGTLTVNVVGSFIMGVLIACV, VIGLGFLGALTTFSTFSMDNV, and NVLLNVILSISAAWIGFHWLM. 2 residues coordinate Na(+): Gly-77 and Thr-80.

Belongs to the fluoride channel Fluc/FEX (TC 1.A.43) family.

It is found in the cell inner membrane. The catalysed reaction is fluoride(in) = fluoride(out). Its activity is regulated as follows. Na(+) is not transported, but it plays an essential structural role and its presence is essential for fluoride channel function. Functionally, fluoride-specific ion channel. Important for reducing fluoride concentration in the cell, thus reducing its toxicity. In Vibrio cholerae serotype O1 (strain ATCC 39541 / Classical Ogawa 395 / O395), this protein is Fluoride-specific ion channel FluC.